The primary structure comprises 170 residues: Protein BofC (170 aa).

A signal peptide spans 1-30 (MKRFSTAYLLLGILCSAAVFLIGAPSRALG).

As to quaternary structure, monomer.

It is found in the forespore intermembrane space. In terms of biological role, inhibits the SpoIVB zymogen from undergoing autocatalytic activation by an unknown mechanism, and in this way plays a role in the sigma-K checkpoint of sporulation. In Bacillus subtilis (strain 168), this protein is Protein BofC (bofC).